The following is a 1448-amino-acid chain: Gag-Pol polyprotein (1448 aa).

Gly-2 carries the N-myristoyl glycine; by host lipid modification. Residues 16–22 (LEKIRLR) carry the Nuclear export signal motif. The Nuclear localization signal signature appears at 26–32 (KKKYMLK). Low complexity predominate over residues 218 to 227 (HPQQAPQQGQ). Residues 218 to 237 (HPQQAPQQGQLREPSGSDIA) form a disordered region. 2 CCHC-type zinc fingers span residues 391–408 (IKCW…QCRA) and 412–429 (QGCW…KCPN). The disordered stretch occupies residues 440-461 (LGKEAPQFPHGSSASGADANCS). A Peptidase A2 domain is found at 517 to 586 (VEVLLDTGAD…TPINIFGRNL (70 aa)). Catalysis depends on Asp-522, which acts as the For protease activity; shared with dimeric partner. The 191-residue stretch at 640–830 (DGQLEEAPPT…PPFQWMGYEL (191 aa)) folds into the Reverse transcriptase domain. The Mg(2+) site is built by Asp-706, Asp-781, and Asp-782. Residues 823–831 (FQWMGYELW) are RT 'primer grip'. The short motif at 993 to 1009 (WEQWWTDYWQVTWIPEW) is the Tryptophan repeat motif element. The RNase H type-1 domain maps to 1029-1152 (IEGEETYYVD…IDHLVSQGIR (124 aa)). Asp-1038, Glu-1073, Asp-1093, and Asp-1144 together coordinate Mg(2+). The segment at 1158 to 1199 (EKIEPAQEEHSKYHSNIKELVFKFGLPRLVAKQIVDTCDKCH) adopts an Integrase-type zinc-finger fold. Zn(2+)-binding residues include His-1167, His-1171, Cys-1195, and Cys-1198. An Integrase catalytic domain is found at 1209-1359 (VNSDLGTWQM…TPAERLINMI (151 aa)). Residues Asp-1219 and Asp-1271 each coordinate Mg(2+). Residues 1378–1425 (FRVYYREGRDQLWKGPGELLWKGEGAVILKVGTDIKVVPRRKAKIIKD) constitute a DNA-binding region (integrase-type). The interval 1426–1448 (YGGGKEMDSSSHMEDTGEAREVA) is disordered.

In terms of assembly, homotrimer. Interacts with gp41 (via C-terminus). As to quaternary structure, homodimer. The active site consists of two apposed aspartic acid residues. Heterodimer of p66 RT and p51 RT (RT p66/p51). Heterodimerization of RT is essential for DNA polymerase activity. Despite the sequence identities, p66 RT and p51 RT have distinct folding. In terms of assembly, homotetramer; may further associate as a homohexadecamer. Mg(2+) serves as cofactor. In terms of processing, specific enzymatic cleavages by the viral protease yield mature proteins. The protease is released by autocatalytic cleavage. The polyprotein is cleaved during and after budding, this process is termed maturation. Proteolytic cleavage of p66 RT removes the RNase H domain to yield the p51 RT subunit. Capsid protein p24 is phosphorylated.

The protein localises to the virion. It localises to the host nucleus. It is found in the host cytoplasm. Its subcellular location is the host cell membrane. It carries out the reaction Specific for a P1 residue that is hydrophobic, and P1' variable, but often Pro.. The enzyme catalyses Endohydrolysis of RNA in RNA/DNA hybrids. Three different cleavage modes: 1. sequence-specific internal cleavage of RNA. Human immunodeficiency virus type 1 and Moloney murine leukemia virus enzymes prefer to cleave the RNA strand one nucleotide away from the RNA-DNA junction. 2. RNA 5'-end directed cleavage 13-19 nucleotides from the RNA end. 3. DNA 3'-end directed cleavage 15-20 nucleotides away from the primer terminus.. It catalyses the reaction 3'-end directed exonucleolytic cleavage of viral RNA-DNA hybrid.. The catalysed reaction is DNA(n) + a 2'-deoxyribonucleoside 5'-triphosphate = DNA(n+1) + diphosphate. With respect to regulation, the viral protease is inhibited by many synthetic protease inhibitors (PIs), such as amprenavir, atazanavir, indinavir, loprinavir, nelfinavir, ritonavir and saquinavir. RT can be inhibited either by nucleoside RT inhibitors (NRTIs) or by non nucleoside RT inhibitors (NNRTIs). NRTIs act as chain terminators, whereas NNRTIs inhibit DNA polymerization by binding a small hydrophobic pocket near the RT active site and inducing an allosteric change in this region. Classical NRTIs are abacavir, adefovir (PMEA), didanosine (ddI), lamivudine (3TC), stavudine (d4T), tenofovir (PMPA), zalcitabine (ddC), and zidovudine (AZT). Classical NNRTIs are atevirdine (BHAP U-87201E), delavirdine, efavirenz (DMP-266), emivirine (I-EBU), and nevirapine (BI-RG-587). The tritherapies used as a basic effective treatment of AIDS associate two NRTIs and one NNRTI. Use of protease inhibitors in tritherapy regimens permit more ambitious therapeutic strategies. Its function is as follows. Gag-Pol polyprotein and Gag polyprotein may regulate their own translation, by the binding genomic RNA in the 5'-UTR. At low concentration, Gag-Pol and Gag would promote translation, whereas at high concentration, the polyproteins encapsidate genomic RNA and then shut off translation. Functionally, matrix protein p17 has two main functions: in infected cell, it targets Gag and Gag-pol polyproteins to the plasma membrane via a multipartite membrane-binding signal, that includes its myristointegration complex. The myristoylation signal and the NLS exert conflicting influences its subcellular localization. The key regulation of these motifs might be phosphorylation of a portion of MA molecules on the C-terminal tyrosine at the time of virus maturation, by virion-associated cellular tyrosine kinase. Implicated in the release from host cell mediated by Vpu. Capsid protein p24 forms the conical core that encapsulates the genomic RNA-nucleocapsid complex in the virion. The core is constituted by capsid protein hexamer subunits. The core is disassembled soon after virion entry. Interaction with host PPIA/CYPA protects the virus from restriction by host TRIM5-alpha and from an unknown antiviral activity in host cells. This capsid restriction by TRIM5 is one of the factors which restricts SIV to the simian species. In terms of biological role, nucleocapsid protein p7 encapsulates and protects viral dimeric unspliced (genomic) RNA. Binds these RNAs through its zinc fingers. Facilitates rearangement of nucleic acid secondary structure during retrotranscription of genomic RNA. This capability is referred to as nucleic acid chaperone activity. Its function is as follows. The aspartyl protease mediates proteolytic cleavages of Gag and Gag-Pol polyproteins during or shortly after the release of the virion from the plasma membrane. Cleavages take place as an ordered, step-wise cascade to yield mature proteins. This process is called maturation. Displays maximal activity during the budding process just prior to particle release from the cell. Also cleaves Nef and Vif, probably concomitantly with viral structural proteins on maturation of virus particles. Hydrolyzes host EIF4GI and PABP1 in order to shut off the capped cellular mRNA translation. The resulting inhibition of cellular protein synthesis serves to ensure maximal viral gene expression and to evade host immune response. Functionally, reverse transcriptase/ribonuclease H (RT) is a multifunctional enzyme that converts the viral dimeric RNA genome into dsDNA in the cytoplasm, shortly after virus entry into the cell. This enzyme displays a DNA polymerase activity that can copy either DNA or RNA templates, and a ribonuclease H (RNase H) activity that cleaves the RNA strand of RNA-DNA heteroduplexes in a partially processive 3' to 5' endonucleasic mode. Conversion of viral genomic RNA into dsDNA requires many steps. A tRNA binds to the primer-binding site (PBS) situated at the 5'-end of the viral RNA. RT uses the 3' end of the tRNA primer to perform a short round of RNA-dependent minus-strand DNA synthesis. The reading proceeds through the U5 region and ends after the repeated (R) region which is present at both ends of viral RNA. The portion of the RNA-DNA heteroduplex is digested by the RNase H, resulting in a ssDNA product attached to the tRNA primer. This ssDNA/tRNA hybridizes with the identical R region situated at the 3' end of viral RNA. This template exchange, known as minus-strand DNA strong stop transfer, can be either intra- or intermolecular. RT uses the 3' end of this newly synthesized short ssDNA to perform the RNA-dependent minus-strand DNA synthesis of the whole template. RNase H digests the RNA template except for two polypurine tracts (PPTs) situated at the 5'-end and near the center of the genome. It is not clear if both polymerase and RNase H activities are simultaneous. RNase H can probably proceed both in a polymerase-dependent (RNA cut into small fragments by the same RT performing DNA synthesis) and a polymerase-independent mode (cleavage of remaining RNA fragments by free RTs). Secondly, RT performs DNA-directed plus-strand DNA synthesis using the PPTs that have not been removed by RNase H as primers. PPTs and tRNA primers are then removed by RNase H. The 3' and 5' ssDNA PBS regions hybridize to form a circular dsDNA intermediate. Strand displacement synthesis by RT to the PBS and PPT ends produces a blunt ended, linear dsDNA copy of the viral genome that includes long terminal repeats (LTRs) at both ends. Integrase catalyzes viral DNA integration into the host chromosome, by performing a series of DNA cutting and joining reactions. This enzyme activity takes place after virion entry into a cell and reverse transcription of the RNA genome in dsDNA. The first step in the integration process is 3' processing. This step requires a complex comprising the viral genome, matrix protein, Vpr and integrase. This complex is called the pre-integration complex (PIC). The integrase protein removes 2 nucleotides from each 3' end of the viral DNA, leaving recessed CA OH's at the 3' ends. In the second step, the PIC enters cell nucleus. This process is mediated through integrase and Vpr proteins, and allows the virus to infect a non dividing cell. This ability to enter the nucleus is specific of lentiviruses, other retroviruses cannot and rely on cell division to access cell chromosomes. In the third step, termed strand transfer, the integrase protein joins the previously processed 3' ends to the 5' ends of strands of target cellular DNA at the site of integration. The 5'-ends are produced by integrase-catalyzed staggered cuts, 5 bp apart. A Y-shaped, gapped, recombination intermediate results, with the 5'-ends of the viral DNA strands and the 3' ends of target DNA strands remaining unjoined, flanking a gap of 5 bp. The last step is viral DNA integration into host chromosome. This involves host DNA repair synthesis in which the 5 bp gaps between the unjoined strands are filled in and then ligated. Since this process occurs at both cuts flanking the SIV genome, a 5 bp duplication of host DNA is produced at the ends of SIV integration. Alternatively, Integrase may catalyze the excision of viral DNA just after strand transfer, this is termed disintegration. This Cercopithecidae (Old World monkeys) protein is Gag-Pol polyprotein (gag-pol).